A 170-amino-acid polypeptide reads, in one-letter code: Ribosome maturation factor RimM (170 aa).

The region spanning 97-170 (KNEFYWTDLI…QIRVEWGSDW (74 aa)) is the PRC barrel domain.

Belongs to the RimM family. As to quaternary structure, binds ribosomal protein uS19.

Its subcellular location is the cytoplasm. An accessory protein needed during the final step in the assembly of 30S ribosomal subunit, possibly for assembly of the head region. Essential for efficient processing of 16S rRNA. May be needed both before and after RbfA during the maturation of 16S rRNA. It has affinity for free ribosomal 30S subunits but not for 70S ribosomes. The protein is Ribosome maturation factor RimM of Dechloromonas aromatica (strain RCB).